A 430-amino-acid chain; its full sequence is MERRRITSARRSYASETVVRGLGPSRQLGTMPRFSLSRMTPPLPARVDFSLAGALNAGFKETRASERAEMMELNDRFASYIEKVRFLEQQNKALAAELNQLRAKEPTKLADVYQAELRELRLRLDQLTANSARLEVERDNFAQDLGTLRQKLQDETNLRLEAENNLAAYRQEADEATLARVDLERKVESLEEEIQFLRKIYEEEVRELREQLAQQQVHVEMDVAKPDLTAALREIRTQYEAVATSNMQETEEWYRSKFADLTDAASRNAELLRQAKHEANDYRRQLQALTCDLESLRGTNESLERQMREQEERHARESASYQEALARLEEEGQSLKEEMARHLQEYQDLLNVKLALDIEIATYRKLLEGEENRITIPVQTFSNLQIRETSLDTKSVSEGHLKRNIVVKTVEMRDGEVIKDSKQEHKDVVM.

The segment at 1 to 69 (MERRRITSAR…KETRASERAE (69 aa)) is head. A Phosphothreonine; by AURKB and ROCK1 modification is found at threonine 7. Arginine 11 is subject to Omega-N-methylarginine. Residue serine 12 is modified to Phosphoserine; by AURKB and ROCK1. Arginine 20 carries the omega-N-methylarginine modification. Arginine 33 carries the citrulline modification. Residue serine 35 is modified to Phosphoserine; by AURKB and ROCK1. Threonine 40 bears the Phosphothreonine mark. One can recognise an IF rod domain in the interval 66–374 (ERAEMMELND…KLLEGEENRI (309 aa)). The interval 70 to 101 (MMELNDRFASYIEKVRFLEQQNKALAAELNQL) is coil 1A. Position 79 is a phosphoserine (serine 79). The linker 1 stretch occupies residues 102 to 112 (RAKEPTKLADV). A phosphothreonine mark is found at threonine 107 and threonine 147. Residues 113 to 211 (YQAELRELRL…EEEVRELREQ (99 aa)) are coil 1B. The segment at 212 to 227 (LAQQQVHVEMDVAKPD) is linker 12. The interval 228 to 249 (LTAALREIRTQYEAVATSNMQE) is coil 2A. Residues 250 to 253 (TEEW) form a linker 2 region. The tract at residues 254-374 (YRSKFADLTD…KLLEGEENRI (121 aa)) is coil 2B. Serine 266 bears the Phosphoserine mark. At arginine 267 the chain carries Citrulline. Serine 320 carries the phosphoserine modification. The tract at residues 375-430 (TIPVQTFSNLQIRETSLDTKSVSEGHLKRNIVVKTVEMRDGEVIKDSKQEHKDVVM) is tail. The residue at position 380 (threonine 380) is a Phosphothreonine. The residue at position 382 (serine 382) is a Phosphoserine. Citrulline occurs at positions 403 and 413.

Belongs to the intermediate filament family. As to quaternary structure, interacts with SYNM. Interacts with PSEN1 (via N-terminus). In terms of processing, phosphorylated by PKN1. In terms of tissue distribution, brain; isoform 2 expressed at 20-fold lower level than isoform 1.

Its subcellular location is the cytoplasm. GFAP, a class-III intermediate filament, is a cell-specific marker that, during the development of the central nervous system, distinguishes astrocytes from other glial cells. The sequence is that of Glial fibrillary acidic protein (Gfap) from Mus musculus (Mouse).